Reading from the N-terminus, the 122-residue chain is Large ribosomal subunit protein bL12 (122 aa).

The protein belongs to the bacterial ribosomal protein bL12 family. In terms of assembly, homodimer. Part of the ribosomal stalk of the 50S ribosomal subunit. Forms a multimeric L10(L12)X complex, where L10 forms an elongated spine to which 2 to 4 L12 dimers bind in a sequential fashion. Binds GTP-bound translation factors.

Its function is as follows. Forms part of the ribosomal stalk which helps the ribosome interact with GTP-bound translation factors. Is thus essential for accurate translation. The sequence is that of Large ribosomal subunit protein bL12 from Streptococcus pneumoniae serotype 19F (strain G54).